Consider the following 665-residue polypeptide: Golgi-associated RAB2B interactor protein 3 (665 aa).

Disordered regions lie at residues 211 to 240 (EIRG…AGGE), 272 to 296 (AAAG…GTAG), and 480 to 590 (SEGY…GSVS). Polar residues predominate over residues 219-232 (NSRPQSSPTVSEAT). Positions 499-513 (EAKEKRERREKDRTS) are enriched in basic and acidic residues. 2 stretches are compositionally biased toward basic residues: residues 514–538 (SRKS…RKTS) and 554–566 (GHGR…HSSS). The Bipartite nuclear localization signal signature appears at 515–531 (RKSSHHRRTGMSRHSSK). A Phosphoserine modification is found at S652.

It belongs to the GARIN family. Interacts (via N-terminus) with RAB2B (in GTP-bound form). Interacts with FRG1. Expressed in adult spermatocytes and spermatids.

The protein localises to the golgi apparatus. It is found in the nucleus. It localises to the cajal body. Functionally, may be involved in RNA biogenesis. This chain is Golgi-associated RAB2B interactor protein 3, found in Mus musculus (Mouse).